Here is a 270-residue protein sequence, read N- to C-terminus: MWNSGFESFSSSSYGAAGGYTQSPGGFGSPTPSQAEKKSRARAQHIVPCTISQLLSATLTDEVFKIGDVEISQVTIVGIIRHAEKAPTNIVYKIDDMTAAPMDVRQWVDTDDTSGENTVVPPETYVKVAGHLRSFQNKKSLVAFKIIPLEDMNEFTAHILEVVNSHLMLSKANSQASVGRPSMSNPGMGEPGNFSGNNFMPANGLTVVQNQVLNLIKACPRPEGLNFQDLRSQLQHMPVASIKQAVDFLCNEGHIYSTVDDDHFKSTDAE.

The residue at position 1 (Met1) is an N-acetylmethionine. Phosphoserine; by PRKDC is present on residues Ser4 and Ser8. Thr21 carries the phosphothreonine; by PRKDC modification. A disordered region spans residues 22 to 41 (QSPGGFGSPTPSQAEKKSRA). Position 23 is a phosphoserine; by CDK2 (Ser23). Residue Ser29 is modified to Phosphoserine; by CDK1. Ser33 is modified (phosphoserine; by PRKDC). Glycyl lysine isopeptide (Lys-Gly) (interchain with G-Cter in ubiquitin) cross-links involve residues Lys37 and Lys38. The segment at residues 74–148 (VTIVGIIRHA…KSLVAFKIIP (75 aa)) is a DNA-binding region (OB). The tract at residues 187 to 270 (GMGEPGNFSG…DDHFKSTDAE (84 aa)) is interaction with RAD52, TIPIN, UNG and XPA.

It belongs to the replication factor A protein 2 family. As to quaternary structure, component of the replication protein A complex (RPA/RP-A), a heterotrimeric complex composed of RPA1, RPA2 and RPA3. Interacts with PRPF19; the PRP19-CDC5L complex is recruited to the sites of DNA repair where it ubiquitinates the replication protein A complex (RPA). Interacts with SERTAD3. Interacts with TIPIN. Interacts with TIMELESS. Interacts with PPP4R2; the interaction is direct, DNA damage-dependent and mediates the recruitment of the PP4 catalytic subunit PPP4C. Interacts (hyperphosphorylated) with RAD51. Interacts with SMARCAL1; the interaction is direct and mediates the recruitment to the RPA complex of SMARCAL1. Interacts with RAD52 and XPA; those interactions are direct and associate RAD52 and XPA to the RPA complex. Interacts with FBH1. Interacts with ETAA1; the interaction is direct and promotes ETAA1 recruitment at stalled replication forks. Interacts with DDI2. Interacts (in unphosphorylated form via N-terminus) with EIF4EBP3; the interaction enhances EIF4EBP3-mediated inhibition of EIF4E-mediated mRNA nuclear export. Interacts with nuclear UNG (isoform 2); this interaction mediates UNG recruitment to RPA-coated single-stranded DNA at stalled replication forks. In terms of processing, differentially phosphorylated throughout the cell cycle, becoming phosphorylated at the G1-S transition and dephosphorylated in late mitosis. Mainly phosphorylated at Ser-23 and Ser-29, by cyclin A-CDK2 and cyclin B-CDK1, respectively during DNA replication and mitosis. Dephosphorylation may require the serine/threonine-protein phosphatase 4. Phosphorylation at Ser-23 and Ser-29 is a prerequisite for further phosphorylation. Becomes hyperphosphorylated on additional residues including Ser-4, Ser-8, Thr-21 and Ser-33 in response to DNA damage. Hyperphosphorylation is mediated by ATM, ATR and PRKDC. Primarily recruited to DNA repair nuclear foci as a hypophosphorylated form it undergoes subsequent hyperphosphorylation, catalyzed by ATR. Hyperphosphorylation is required for RAD51 recruitment to chromatin and efficient DNA repair. Phosphorylation at Thr-21 depends upon RFWD3 presence. DNA damage-induced 'Lys-63'-linked polyubiquitination by PRPF19 mediates ATRIP recruitment to the RPA complex at sites of DNA damage and activation of ATR. Ubiquitinated by RFWD3 at stalled replication forks in response to DNA damage: ubiquitination by RFWD3 does not lead to degradation by the proteasome and promotes removal of the RPA complex from stalled replication forks, promoting homologous recombination.

The protein localises to the nucleus. It is found in the PML body. Functionally, as part of the heterotrimeric replication protein A complex (RPA/RP-A), binds and stabilizes single-stranded DNA intermediates, that form during DNA replication or upon DNA stress. It prevents their reannealing and in parallel, recruits and activates different proteins and complexes involved in DNA metabolism. Thereby, it plays an essential role both in DNA replication and the cellular response to DNA damage. In the cellular response to DNA damage, the RPA complex controls DNA repair and DNA damage checkpoint activation. Through recruitment of ATRIP activates the ATR kinase a master regulator of the DNA damage response. It is required for the recruitment of the DNA double-strand break repair factors RAD51 and RAD52 to chromatin in response to DNA damage. Also recruits to sites of DNA damage proteins like XPA and XPG that are involved in nucleotide excision repair and is required for this mechanism of DNA repair. Also plays a role in base excision repair (BER) probably through interaction with UNG. Also recruits SMARCAL1/HARP, which is involved in replication fork restart, to sites of DNA damage. May also play a role in telomere maintenance. This chain is Replication protein A 32 kDa subunit (Rpa2), found in Rattus norvegicus (Rat).